We begin with the raw amino-acid sequence, 194 residues long: MTAVQLIVGLGNPGPEYEQTRHNAGALFVERVASAKGVRLSADKKYFGLVGKFSHQGRDVRLLIPTTYMNRSGQSVAALANFFRIPPAAILVAHDELDMPPGTARLKQGGGHGGHNGLRDIIAQFGNQNSFYRLRLGIGHPGDKNLVSGFVLGRAPRSEQEKLEACIDFALDVLPDMLDGNWTRAMQQLHSRKA.

Position 17 (tyrosine 17) interacts with tRNA. Histidine 22 functions as the Proton acceptor in the catalytic mechanism. TRNA-binding residues include tyrosine 68, asparagine 70, and asparagine 116.

The protein belongs to the PTH family. Monomer.

Its subcellular location is the cytoplasm. It carries out the reaction an N-acyl-L-alpha-aminoacyl-tRNA + H2O = an N-acyl-L-amino acid + a tRNA + H(+). Hydrolyzes ribosome-free peptidyl-tRNAs (with 1 or more amino acids incorporated), which drop off the ribosome during protein synthesis, or as a result of ribosome stalling. In terms of biological role, catalyzes the release of premature peptidyl moieties from peptidyl-tRNA molecules trapped in stalled 50S ribosomal subunits, and thus maintains levels of free tRNAs and 50S ribosomes. This chain is Peptidyl-tRNA hydrolase, found in Azotobacter vinelandii (strain DJ / ATCC BAA-1303).